Consider the following 483-residue polypeptide: Regulatory protein ViaA (483 aa).

It belongs to the ViaA family. As to quaternary structure, homodimer. Interacts with RavA.

It is found in the cytoplasm. In terms of biological role, component of the RavA-ViaA chaperone complex, which may act on the membrane to optimize the function of some of the respiratory chains. ViaA stimulates the ATPase activity of RavA. This chain is Regulatory protein ViaA, found in Salmonella schwarzengrund (strain CVM19633).